The primary structure comprises 542 residues: CTP synthase (542 aa).

An amidoligase domain region spans residues M1 to I265. S13 contributes to the CTP binding site. S13 contacts UTP. ATP is bound by residues S14 to I19 and D71. Mg(2+) contacts are provided by D71 and E139. CTP-binding positions include D146 to E148, K186 to Q191, and K222. UTP-binding positions include K186 to Q191 and K222. Positions T291 to L541 constitute a Glutamine amidotransferase type-1 domain. An L-glutamine-binding site is contributed by G353. The active-site Nucleophile; for glutamine hydrolysis is the C380. L-glutamine-binding positions include F381–Q384, E404, and R469. Catalysis depends on residues H514 and E516.

This sequence belongs to the CTP synthase family. In terms of assembly, homotetramer.

It carries out the reaction UTP + L-glutamine + ATP + H2O = CTP + L-glutamate + ADP + phosphate + 2 H(+). It catalyses the reaction L-glutamine + H2O = L-glutamate + NH4(+). The enzyme catalyses UTP + NH4(+) + ATP = CTP + ADP + phosphate + 2 H(+). It participates in pyrimidine metabolism; CTP biosynthesis via de novo pathway; CTP from UDP: step 2/2. With respect to regulation, allosterically activated by GTP, when glutamine is the substrate; GTP has no effect on the reaction when ammonia is the substrate. The allosteric effector GTP functions by stabilizing the protein conformation that binds the tetrahedral intermediate(s) formed during glutamine hydrolysis. Inhibited by the product CTP, via allosteric rather than competitive inhibition. Functionally, catalyzes the ATP-dependent amination of UTP to CTP with either L-glutamine or ammonia as the source of nitrogen. Regulates intracellular CTP levels through interactions with the four ribonucleotide triphosphates. In Rhizobium meliloti (strain 1021) (Ensifer meliloti), this protein is CTP synthase.